Here is an 890-residue protein sequence, read N- to C-terminus: Kinesin-like protein KIF20A (890 aa).

Ser2 carries the N-acetylserine modification. A phosphoserine mark is found at Ser7, Ser14, and Ser21. Positions 64–507 (KVKVYLRVRP…AKFSAIASQL (444 aa)) constitute a Kinesin motor domain. 160 to 167 (GVTNSGKT) contributes to the ATP binding site. Position 528 is a phosphoserine; by PLK1 (Ser528). Phosphoserine is present on residues Ser532, Ser662, Ser668, Ser685, and Ser825. Residues 611-762 (LDTQKELLEE…ESLQSAERAC (152 aa)) are a coiled coil. The globular stretch occupies residues 763–890 (CHSTGAGKLR…LKSGPFGKKY (128 aa)). The segment at 832–865 (TNQENQQPNQQPPGKKPFLRNLLPRTPTCQSSTD) is disordered. At Thr857 the chain carries Phosphothreonine. 3 positions are modified to phosphoserine: Ser867, Ser878, and Ser883.

It belongs to the TRAFAC class myosin-kinesin ATPase superfamily. Kinesin family. In terms of processing, phosphorylated by PLK1 at Ser-528 during mitosis, creating a docking site for PLK1 and recruiting PLK1 at central spindle.

It localises to the golgi apparatus. The protein resides in the cytoplasm. It is found in the cytoskeleton. Its subcellular location is the spindle. In terms of biological role, mitotic kinesin required for chromosome passenger complex (CPC)-mediated cytokinesis. Following phosphorylation by PLK1, involved in recruitment of PLK1 to the central spindle. Interacts with guanosine triphosphate (GTP)-bound forms of RAB6A and RAB6B. May act as a motor required for the retrograde RAB6 regulated transport of Golgi membranes and associated vesicles along microtubules. Has a microtubule plus end-directed motility. The sequence is that of Kinesin-like protein KIF20A (KIF20A) from Homo sapiens (Human).